A 335-amino-acid polypeptide reads, in one-letter code: Trans-3-hydroxy-L-proline dehydratase (335 aa).

The active-site Proton acceptor is C91. Residues 92-93 (GH), D251, and 256-257 (GS) each bind substrate.

This sequence belongs to the proline racemase family.

The catalysed reaction is trans-3-hydroxy-L-proline = 1-pyrroline-2-carboxylate + H2O. In terms of biological role, catalyzes the dehydration of trans-3-hydroxy-L-proline (t3LHyp) to Delta(1)-pyrroline-2-carboxylate (Pyr2C). Is likely involved in a degradation pathway that converts t3LHyp to L-proline. Displays neither trans-4-hydroxy-L-proline (t4LHyp) epimerase nor proline racemase activity. The sequence is that of Trans-3-hydroxy-L-proline dehydratase from Burkholderia ambifaria (strain ATCC BAA-244 / DSM 16087 / CCUG 44356 / LMG 19182 / AMMD) (Burkholderia cepacia (strain AMMD)).